A 360-amino-acid chain; its full sequence is tRNA N6-adenosine threonylcarbamoyltransferase (360 aa).

Fe cation contacts are provided by His111 and His115. Residues 134 to 138, Asp167, Gly180, Asp184, and Asn279 each bind substrate; that span reads LVSGG. Asp307 contributes to the Fe cation binding site.

Belongs to the KAE1 / TsaD family. It depends on Fe(2+) as a cofactor.

The protein localises to the cytoplasm. The catalysed reaction is L-threonylcarbamoyladenylate + adenosine(37) in tRNA = N(6)-L-threonylcarbamoyladenosine(37) in tRNA + AMP + H(+). Its function is as follows. Required for the formation of a threonylcarbamoyl group on adenosine at position 37 (t(6)A37) in tRNAs that read codons beginning with adenine. Is involved in the transfer of the threonylcarbamoyl moiety of threonylcarbamoyl-AMP (TC-AMP) to the N6 group of A37, together with TsaE and TsaB. TsaD likely plays a direct catalytic role in this reaction. This is tRNA N6-adenosine threonylcarbamoyltransferase from Acaryochloris marina (strain MBIC 11017).